A 166-amino-acid polypeptide reads, in one-letter code: Interleukin-2 (166 aa).

Residues 1–20 (MYSMQLASCVTLTLVLLVNS) form the signal peptide. Threonine 23 carries O-linked (GalNAc...) threonine glycosylation. A disulfide bond links cysteine 89 and cysteine 137.

The protein belongs to the IL-2 family.

It is found in the secreted. Its function is as follows. Cytokine produced by activated CD4-positive helper T-cells and to a lesser extend activated CD8-positive T-cells and natural killer (NK) cells that plays pivotal roles in the immune response and tolerance. Binds to a receptor complex composed of either the high-affinity trimeric IL-2R (IL2RA/CD25, IL2RB/CD122 and IL2RG/CD132) or the low-affinity dimeric IL-2R (IL2RB and IL2RG). Interaction with the receptor leads to oligomerization and conformation changes in the IL-2R subunits resulting in downstream signaling starting with phosphorylation of JAK1 and JAK3. In turn, JAK1 and JAK3 phosphorylate the receptor to form a docking site leading to the phosphorylation of several substrates including STAT5. This process leads to activation of several pathways including STAT, phosphoinositide-3-kinase/PI3K and mitogen-activated protein kinase/MAPK pathways. Functions as a T-cell growth factor and can increase NK-cell cytolytic activity as well. Promotes strong proliferation of activated B-cells and subsequently immunoglobulin production. Plays a pivotal role in regulating the adaptive immune system by controlling the survival and proliferation of regulatory T-cells, which are required for the maintenance of immune tolerance. Moreover, participates in the differentiation and homeostasis of effector T-cell subsets, including Th1, Th2, Th17 as well as memory CD8-positive T-cells. The sequence is that of Interleukin-2 (Il2) from Mus spretus (Western Mediterranean mouse).